Reading from the N-terminus, the 76-residue chain is Small ribosomal subunit protein uS17 (76 aa).

It belongs to the universal ribosomal protein uS17 family. Part of the 30S ribosomal subunit.

Functionally, one of the primary rRNA binding proteins, it binds specifically to the 5'-end of 16S ribosomal RNA. This chain is Small ribosomal subunit protein uS17, found in Ruegeria pomeroyi (strain ATCC 700808 / DSM 15171 / DSS-3) (Silicibacter pomeroyi).